Reading from the N-terminus, the 208-residue chain is Ribonuclease HII (208 aa).

The RNase H type-2 domain maps to 11 to 203; sequence GPVAGVDEAG…VAAAHEQWLK (193 aa). Residues Asp-17, Glu-18, and Asp-112 each contribute to the a divalent metal cation site.

It belongs to the RNase HII family. It depends on Mn(2+) as a cofactor. Requires Mg(2+) as cofactor.

The protein localises to the cytoplasm. The enzyme catalyses Endonucleolytic cleavage to 5'-phosphomonoester.. In terms of biological role, endonuclease that specifically degrades the RNA of RNA-DNA hybrids. In Corynebacterium jeikeium (strain K411), this protein is Ribonuclease HII.